The sequence spans 522 residues: Mediator of RNA polymerase II transcription subunit 1.2 (522 aa).

Positions 13–40 (LLEQRKNQELNIEHIDEEMRLEQVRQAA) form a coiled coil.

This sequence belongs to the Mediator complex subunit 1 family. In terms of assembly, component of the Mediator complex.

Its subcellular location is the nucleus. Component of the Mediator complex, a coactivator involved in the regulated transcription of nearly all RNA polymerase II-dependent genes. Mediator functions as a bridge to convey information from gene-specific regulatory proteins to the basal RNA polymerase II transcription machinery. Mediator is recruited to promoters by direct interactions with regulatory proteins and serves as a scaffold for the assembly of a functional preinitiation complex with RNA polymerase II and the general transcription factors. In Caenorhabditis elegans, this protein is Mediator of RNA polymerase II transcription subunit 1.2 (mdt-1.2).